A 190-amino-acid polypeptide reads, in one-letter code: LIM domain-containing protein WLIM1 (190 aa).

Alanine 2 carries the N-acetylalanine modification. The region spanning 8–68 is the LIM zinc-binding 1 domain; sequence QKCMACDKTV…RPHFDQNFKR (61 aa). The disordered stretch occupies residues 74 to 98; sequence KSFEGTPKIGKPDRPLEGERPAGTK. Basic and acidic residues predominate over residues 83–95; that stretch reads GKPDRPLEGERPA. The LIM zinc-binding 2 domain occupies 108 to 168; it reads EKCVGCDKTV…KHHHIQLIKE (61 aa).

In terms of assembly, interacts with F-actin. As to expression, expressed in roots, leaves, stems, flowers and siliques. Not detected in pollen.

It localises to the cytoplasm. The protein resides in the cytoskeleton. In terms of biological role, binds to actin filaments and promotes cross-linking into thick bundles. Has an actin-stabilizing activity. The actin regulatory activities are not regulated by pH and [Ca(2+)]. The chain is LIM domain-containing protein WLIM1 from Arabidopsis thaliana (Mouse-ear cress).